Consider the following 134-residue polypeptide: Small ribosomal subunit protein uS11 (134 aa).

It belongs to the universal ribosomal protein uS11 family. Part of the 30S ribosomal subunit. Interacts with proteins S7 and S18. Binds to IF-3.

In terms of biological role, located on the platform of the 30S subunit, it bridges several disparate RNA helices of the 16S rRNA. Forms part of the Shine-Dalgarno cleft in the 70S ribosome. The protein is Small ribosomal subunit protein uS11 of Salinibacter ruber (strain DSM 13855 / M31).